The following is a 390-amino-acid chain: Glucose-fructose oxidoreductase domain-containing protein 1 (390 aa).

Residues 1–21 (MLPGVGVFGTSLTARVIIPLL) form the signal peptide.

This sequence belongs to the Gfo/Idh/MocA family. As to quaternary structure, homodimer. Interacts with NKIRAS2.

The protein localises to the secreted. Probably catalytically inactive enzyme. Does not bind NAD or NADP. The sequence is that of Glucose-fructose oxidoreductase domain-containing protein 1 (Gfod1) from Mus musculus (Mouse).